The following is a 33-amino-acid chain: Photosystem II reaction center protein Psb30 (33 aa).

The chain crosses the membrane as a helical span at residues 5–25; the sequence is LALTLVSLVLVVSAGPLVVVL.

Belongs to the Psb30/Ycf12 family. In terms of assembly, PSII is composed of 1 copy each of membrane proteins PsbA, PsbB, PsbC, PsbD, PsbE, PsbF, PsbH, PsbI, PsbJ, PsbK, PsbL, PsbM, PsbT, PsbX, PsbY, PsbZ, Psb30/Ycf12, peripheral proteins of the oxygen-evolving complex and a large number of cofactors. It forms dimeric complexes.

The protein resides in the plastid. It is found in the chloroplast thylakoid membrane. In terms of biological role, a core subunit of photosystem II (PSII), required for optimal photosynthesis, probably helps stabilize the reaction center. This chain is Photosystem II reaction center protein Psb30, found in Chlamydomonas reinhardtii (Chlamydomonas smithii).